The following is a 363-amino-acid chain: Cell division cycle-associated protein 3 (363 aa).

Residues 1-12 (MGSAESKAQVTP) are compositionally biased toward polar residues. Disordered regions lie at residues 1–81 (MGSA…TPLR), 126–152 (VESQ…KAET), 191–210 (MNDQ…EESP), and 231–363 (ENLN…HSNS). The segment at 93 to 152 (KQLSEVFVAEDSSTEGGPLGFTGPEATNLERQVVESQTAPPAGEHVNDHEVEPSVEKAET) is F-box-like. Positions 137-152 (HVNDHEVEPSVEKAET) are enriched in basic and acidic residues. The span at 192 to 210 (NDQEESPIAETMNDQEESP) shows a compositional bias: acidic residues. Positions 259 to 285 (SVVSTESTQATGQQQKTRGKSPRSSGV) are enriched in polar residues. A compositionally biased stretch (low complexity) spans 296 to 308 (LLSSSSGRSPLRI). Residues 311 to 321 (EDNSPNTNTQH) show a composition bias toward polar residues. Positions 353–355 (KEN) match the KEN box motif.

Interacts with wee1, when wee1 is phosphorylated at 'Ser-38'. Post-translationally, phosphorylated. In terms of processing, ubiquitinated and degraded by the APC/C-Cdh1 complex during G1 phase.

It localises to the cytoplasm. It is found in the cytosol. The protein operates within protein modification; protein ubiquitination. Its function is as follows. F-box-like protein which is required for entry into mitosis. Acts by participating in E3 ligase complexes that mediate the ubiquitination and degradation of WEE1 kinase at G2/M phase. The sequence is that of Cell division cycle-associated protein 3 (cdca3) from Xenopus laevis (African clawed frog).